The following is a 938-amino-acid chain: Kexin (938 aa).

An N-terminal signal peptide occupies residues 1 to 20; the sequence is MLPIKLLIFILGYLLSPTLQ. N-linked (GlcNAc...) asparagine glycans are attached at residues Asn41 and Asn193. A Peptidase S8 domain is found at 179–489; sequence QWHLINLKYP…YGKTDAYKMV (311 aa). Residues Asp213 and His251 each act as charge relay system in the active site. 2 cysteine pairs are disulfide-bonded: Cys267–Cys414 and Cys359–Cys389. Ser422 functions as the Charge relay system in the catalytic mechanism. N-linked (GlcNAc...) asparagine glycosylation is found at Asn441, Asn512, Asn539, and Asn599. The region spanning 498–647 is the P/Homo B domain; sequence VKPQAWYYSD…QFRIFGESID (150 aa). The disordered stretch occupies residues 671–768; that stretch reads EKQNSKSTTT…DNDNDNGNKK (98 aa). Low complexity predominate over residues 677–691; it reads STTTTSSTTTATTTS. The segment covering 711-735 has biased composition (polar residues); sequence KVDNSASITTSQTASLTSSNEQHQP. Acidic residues predominate over residues 740–762; it reads SDSDSDTDDENKQEGEEDNDNDN. A helical membrane pass occupies residues 775–795; sequence GFYLMSIAVVGFIAVLLVMKF. Residues 796 to 924 lie on the Cytoplasmic side of the membrane; it reads HKTPGSGRRR…SGTSTKKYKD (129 aa). Positions 798–808 are enriched in basic residues; the sequence is TPGSGRRRRRR. Positions 798–938 are disordered; sequence TPGSGRRRRR…EDHKDVVGTQ (141 aa). A compositionally biased stretch (acidic residues) spans 820–831; that stretch reads DYSDSDDDEDDF. Residues 832–849 show a composition bias toward basic and acidic residues; that stretch reads DTRRADDDSFDLGHRNDQ. Positions 850–859 are enriched in low complexity; that stretch reads RVVSASQQQR. A compositionally biased stretch (basic and acidic residues) spans 860-874; that stretch reads QYDRQQDETRDRLFD. The span at 902–919 shows a compositional bias: polar residues; that stretch reads QQSAKAPSNSEGNSGTST. Residues 921-938 are compositionally biased toward basic and acidic residues; it reads KYKDNEADEDHKDVVGTQ.

The protein belongs to the peptidase S8 family. Furin subfamily. The cofactor is Ca(2+). Post-translationally, O-glycosylated.

It is found in the golgi apparatus. It localises to the trans-Golgi network membrane. The enzyme catalyses Cleavage of -Lys-Arg-|-Xaa- and -Arg-Arg-|-Xaa- bonds to process yeast alpha-factor pheromone and killer toxin precursors.. The sequence is that of Kexin (KEX2) from Candida albicans (strain WO-1) (Yeast).